Reading from the N-terminus, the 423-residue chain is Serine/threonine-protein kinase ppk25 (423 aa).

Residues serine 36 and serine 38 each carry the phosphoserine modification. The 253-residue stretch at 53-305 (WIIKKTIGAG…LEQAAKFPWL (253 aa)) folds into the Protein kinase domain. ATP contacts are provided by residues 59 to 67 (IGAGSMGKV) and lysine 82. Catalysis depends on aspartate 175, which acts as the Proton acceptor.

This sequence belongs to the protein kinase superfamily. Ser/Thr protein kinase family.

The protein resides in the cytoplasm. The enzyme catalyses L-seryl-[protein] + ATP = O-phospho-L-seryl-[protein] + ADP + H(+). It catalyses the reaction L-threonyl-[protein] + ATP = O-phospho-L-threonyl-[protein] + ADP + H(+). The sequence is that of Serine/threonine-protein kinase ppk25 (ppk25) from Schizosaccharomyces pombe (strain 972 / ATCC 24843) (Fission yeast).